The sequence spans 240 residues: Aldehyde dehydrogenase, cytosolic 2 (240 aa).

Residues Glu-8 and Cys-42 contribute to the active site. Lys-106, Lys-149, Lys-151, and Lys-174 each carry N6-acetyllysine.

Belongs to the aldehyde dehydrogenase family. Homotetramer. As to expression, non-lens specific, predominant form expressed in the liver.

The protein localises to the cytoplasm. It catalyses the reaction an aldehyde + NAD(+) + H2O = a carboxylate + NADH + 2 H(+). The protein operates within alcohol metabolism; ethanol degradation; acetate from ethanol: step 2/2. Its function is as follows. Elephant shrews, in contrast to other mammals, possess both a lens- and a non-lens specific class-1 aldehyde dehydrogenase. Can convert/oxidize retinaldehyde to retinoic acid. This Macroscelides proboscideus (Short-eared elephant shrew) protein is Aldehyde dehydrogenase, cytosolic 2.